A 150-amino-acid polypeptide reads, in one-letter code: Arginine repressor (150 aa).

The protein belongs to the ArgR family.

It localises to the cytoplasm. The protein operates within amino-acid biosynthesis; L-arginine biosynthesis [regulation]. Functionally, regulates arginine biosynthesis genes. The protein is Arginine repressor of Clostridium botulinum (strain Alaska E43 / Type E3).